The sequence spans 164 residues: SsrA-binding protein (164 aa).

Belongs to the SmpB family.

It localises to the cytoplasm. Functionally, required for rescue of stalled ribosomes mediated by trans-translation. Binds to transfer-messenger RNA (tmRNA), required for stable association of tmRNA with ribosomes. tmRNA and SmpB together mimic tRNA shape, replacing the anticodon stem-loop with SmpB. tmRNA is encoded by the ssrA gene; the 2 termini fold to resemble tRNA(Ala) and it encodes a 'tag peptide', a short internal open reading frame. During trans-translation Ala-aminoacylated tmRNA acts like a tRNA, entering the A-site of stalled ribosomes, displacing the stalled mRNA. The ribosome then switches to translate the ORF on the tmRNA; the nascent peptide is terminated with the 'tag peptide' encoded by the tmRNA and targeted for degradation. The ribosome is freed to recommence translation, which seems to be the essential function of trans-translation. The sequence is that of SsrA-binding protein from Corynebacterium glutamicum (strain R).